A 549-amino-acid polypeptide reads, in one-letter code: Cation/acetate symporter ActP (549 aa).

13 consecutive transmembrane segments (helical) span residues 33–53 (WQAI…TYWA), 77–97 (LAIA…ALVF), 103–123 (GLIY…LIAE), 148–168 (ILSA…QMVG), 183–203 (IAVV…GMLA), 206–226 (WVQI…AFMV), 262–282 (ISAL…PHIL), 303–323 (GFMG…IMLV), 355–375 (LFLG…VAGL), 404–424 (VSKI…VLFE), 428–448 (IAFM…PIIL), 464–484 (GGWL…TIWV), and 493–513 (IFPY…GIWF).

The protein belongs to the sodium:solute symporter (SSF) (TC 2.A.21) family.

The protein resides in the cell inner membrane. Functionally, transports acetate. This chain is Cation/acetate symporter ActP, found in Escherichia fergusonii (strain ATCC 35469 / DSM 13698 / CCUG 18766 / IAM 14443 / JCM 21226 / LMG 7866 / NBRC 102419 / NCTC 12128 / CDC 0568-73).